Here is a 461-residue protein sequence, read N- to C-terminus: Ribitol-5-phosphate transferase FKTN (461 aa).

The Cytoplasmic segment spans residues 1–7 (MSRINKN). Residues 6–27 (KNVVLALLTLTSSAFLLFQLYY) form a required and sufficient for interaction with POMGNT1 region. Residues 8–28 (VVLALLTLTSSAFLLFQLYYY) form a helical; Signal-anchor for type II membrane protein membrane-spanning segment. Residues 29 to 461 (KHYLSTRNGA…SEWDEVIQLY (433 aa)) lie on the Lumenal side of the membrane. A glycan (N-linked (GlcNAc...) asparagine) is linked at N92.

Belongs to the LicD transferase family. As to quaternary structure, forms a complex composed of FKTN/fukutin, FKRP and RXYLT1/TMEM5. Interacts (via transmembrane domain) with POMGNT1; the interaction is direct and is required for normal POMGNT1 location in Golgi membranes. As to expression, expressed in the retina (at protein level).

The protein resides in the golgi apparatus membrane. It localises to the cytoplasm. The protein localises to the nucleus. The catalysed reaction is 3-O-[beta-D-GalNAc-(1-&gt;3)-beta-D-GlcNAc-(1-&gt;4)-(O-6-P-alpha-D-Man)]-Thr-[protein] + CDP-L-ribitol = 3-O-[Rib-ol-P-3-beta-D-GalNAc-(1-&gt;3)-beta-D-GlcNAc-(1-&gt;4)-(O-6-P-alpha-D-Man)]-Thr-[protein] + CMP + H(+). It functions in the pathway protein modification; protein glycosylation. Catalyzes the transfer of CDP-ribitol to the distal N-acetylgalactosamine of the phosphorylated O-mannosyl trisaccharide (N-acetylgalactosamine-beta-3-N-acetylglucosamine-beta-4-(phosphate-6-)mannose), a carbohydrate structure present in alpha-dystroglycan (DAG1). This constitutes the first step in the formation of the ribitol 5-phosphate tandem repeat which links the phosphorylated O-mannosyl trisaccharide to the ligand binding moiety composed of repeats of 3-xylosyl-alpha-1,3-glucuronic acid-beta-1. May interact with and reinforce a large complex encompassing the outside and inside of muscle membranes. Could be involved in brain development. The chain is Ribitol-5-phosphate transferase FKTN from Macaca fascicularis (Crab-eating macaque).